The chain runs to 269 residues: Tryptophan synthase alpha chain (269 aa).

Catalysis depends on proton acceptor residues glutamate 49 and aspartate 60.

This sequence belongs to the TrpA family. In terms of assembly, tetramer of two alpha and two beta chains.

The catalysed reaction is (1S,2R)-1-C-(indol-3-yl)glycerol 3-phosphate + L-serine = D-glyceraldehyde 3-phosphate + L-tryptophan + H2O. The protein operates within amino-acid biosynthesis; L-tryptophan biosynthesis; L-tryptophan from chorismate: step 5/5. In terms of biological role, the alpha subunit is responsible for the aldol cleavage of indoleglycerol phosphate to indole and glyceraldehyde 3-phosphate. This chain is Tryptophan synthase alpha chain, found in Klebsiella aerogenes (Enterobacter aerogenes).